The chain runs to 359 residues: uncharacterized protein (359 aa).

The N-terminal stretch at 1–15 is a signal peptide; that stretch reads MSIVLAIDTATAAVT. One can recognise an N-acetyltransferase domain in the interval 212–359; that stretch reads IVIGTLTPAD…DAYLMRREAQ (148 aa).

This is an uncharacterized protein from Mycobacterium leprae (strain TN).